Reading from the N-terminus, the 500-residue chain is L-arabinose isomerase (500 aa).

Mn(2+)-binding residues include Glu306, Glu333, His349, and His448.

The protein belongs to the arabinose isomerase family. Mn(2+) is required as a cofactor.

The enzyme catalyses beta-L-arabinopyranose = L-ribulose. The protein operates within carbohydrate degradation; L-arabinose degradation via L-ribulose; D-xylulose 5-phosphate from L-arabinose (bacterial route): step 1/3. Catalyzes the conversion of L-arabinose to L-ribulose. The chain is L-arabinose isomerase from Cellvibrio japonicus (strain Ueda107) (Pseudomonas fluorescens subsp. cellulosa).